Here is a 300-residue protein sequence, read N- to C-terminus: MGPYLSQPKREKVTTSGEGKSVIFAASEMQGWRNTMEDAHIHRPDIVQDVSVFGVFDGHGGREVAQFVEKHFIDELLKNKNFKEQKFEDALKETFLKMDELLMTPEGAKELNNYKATDTDESYAGCTANVALIHKNTLYVANAGDSRSVLCRNNTNFDMSVDHKPDNNEEKSRIERAGGFVSDGRVNGNLNLSRALGDLEYKSDSKLRPNEQLIIAFPDVKKTELTPQDKFILMGCDGVFETLNHQELLKHVNTTLGNSPVTENLLSKAAEDLLDQLLAPDTSQGTGCDNMTTILVYLKK.

A PPM-type phosphatase domain is found at isoleucine 23–leucine 298. Mn(2+) contacts are provided by aspartate 57, glycine 58, aspartate 237, and aspartate 289.

Belongs to the PP2C family. Mg(2+) serves as cofactor. Mn(2+) is required as a cofactor.

Its subcellular location is the membrane. The enzyme catalyses O-phospho-L-seryl-[protein] + H2O = L-seryl-[protein] + phosphate. It carries out the reaction O-phospho-L-threonyl-[protein] + H2O = L-threonyl-[protein] + phosphate. Its function is as follows. Enzyme with a broad specificity. The sequence is that of Probable protein phosphatase 2C 3 from Paramecium tetraurelia.